We begin with the raw amino-acid sequence, 984 residues long: MRAPARGTGCCGRSGGRWLAGAAQPRCLWAGGAGQRFMVPGGTMKSLKKDSRLRITPTRLLEASENVKEKKRAKGPEQPTPTIQEEPEPVSNVLQGDDILALAIKKEDLKEQHIPRLTEKEDKRVITQKFIIRKLKPMDPRRKVCHLVARPANPDEATKPLDYSGPGDSFDGSDQILPHHILGSLQDFKRIALARGNTQLAERIPTSPCLMTLISAEGESKQKAPKEEKRPPWAPPPQHNFLKNWQRNTALRKKQQEALSEHLKKPVSELLMHTGETYRRIQEERELIDCTLPTRRDRKSWENSGFWSRLEYLGDEMTGLVMTKTKTQRGLMEPITHIRKPHSIRVETGLPAQRDASYRYTWDRSLFLIYRRKELQRIMEELDFSQQDIDGLEVVGKGWPFSAVTVEDYTVFERSQGSSSEDTAYLGTLASSSDVSMPILGPSLLFCGKPACWIRGSNPQDKRQVGIAAHLTFETLEGEKTSSELTVVNNGTVAIWYDWRRQHQPDTFQDLKKNRMQRFYFDNREGVILPGEIKTFTFFFKSLTAGVFREFWEFRTHPTLLGGAILQVNLHAVSLTQDVFEDERKVLESKLTAHEAVTVVREVLQELLMGVLTPERTPSPVDAYLTEEDLFRHRNPPLHYEHQVVQSLHQLWRQYMTLPAKAEEARPGDKEHVSPIATEKASVNAELLPRFRSPISETQVPRPENEALRESGSQKARVGTKSPQRKSIMEEILVEESPDVDSTKSPWEPDGLPLLEWNLCLEDFRKAVMVLPDENHREDALMRLNKAALELCQKPRPLQSNLLHQMCLQLWRDVIDSLVGHSMWLRSVLGLPEKETIYLNVPEEQDQKSPPIMEVKVPVGKAGKEERKGAAQEKKQLGIKDKEDKKGAKLLGKEDRPNSKKHKAKDDKKVIKSASQDRFSLEDPTPDIILSSQEPIDPLVMGKYTQSLHSEVRGLLDTLVTDLMVLADELSPIKNVEEALRLCR.

Disordered stretches follow at residues 61–88 (LEASENVKEKKRAKGPEQPTPTIQEEPE) and 218–240 (GESKQKAPKEEKRPPWAPPPQHN). The segment covering 218-231 (GESKQKAPKEEKRP) has biased composition (basic and acidic residues). Phosphothreonine is present on Thr613. Residue Ser619 is modified to Phosphoserine. Disordered regions lie at residues 693–729 (SPISETQVPRPENEALRESGSQKARVGTKSPQRKSIM) and 842–917 (PEEQ…ASQD). Positions 862 to 910 (AGKEERKGAAQEKKQLGIKDKEDKKGAKLLGKEDRPNSKKHKAKDDKKV) are enriched in basic and acidic residues.

In terms of assembly, interacts with MYCBP. Expressed specifically in testis.

It is found in the cytoplasm. It localises to the membrane. May play a role in spermatogenesis. May be involved in synaptic processes. The chain is MYCBP-associated protein from Homo sapiens (Human).